The sequence spans 211 residues: tRNA (guanine-N(7)-)-methyltransferase (211 aa).

The S-adenosyl-L-methionine site is built by Glu44, Asp69, Asp96, and Asp118. Asp118 is a catalytic residue. Lys122 contributes to the substrate binding site. The interaction with RNA stretch occupies residues 124–129 (KHEKRR). Residues Asp154 and 191-194 (TEYE) each bind substrate.

It belongs to the class I-like SAM-binding methyltransferase superfamily. TrmB family.

The enzyme catalyses guanosine(46) in tRNA + S-adenosyl-L-methionine = N(7)-methylguanosine(46) in tRNA + S-adenosyl-L-homocysteine. It participates in tRNA modification; N(7)-methylguanine-tRNA biosynthesis. In terms of biological role, catalyzes the formation of N(7)-methylguanine at position 46 (m7G46) in tRNA. The chain is tRNA (guanine-N(7)-)-methyltransferase from Streptococcus agalactiae serotype Ia (strain ATCC 27591 / A909 / CDC SS700).